Reading from the N-terminus, the 1040-residue chain is Multidrug resistance protein MdtB (1040 aa).

A run of 11 helical transmembrane segments spans residues 15–37 (LFILRPVATTLLMAAILLAGIIG), 345–362 (FELMLAIALVVMIIYLFL), 367–389 (ATIIPGVAVPLSLIGTFAVMVFL), 396–418 (LTLMALTIATGFVVDDAIVVIEN), 438–460 (GEIGFTIISLTFSLIAVLIPLLF), 472–494 (FAVTLAVAILISAVVSLTLTPMM), 535–557 (HPWLTLSVAFATLLLSVMLWIVI), 867–889 (VWLIVAAVVAMYIVLGVLYESFI), 909–931 (LIIAGSELDIIAIIGIILLIGIV), 968–990 (ILMTTLAALLGALPLMLSTGVGT), and 1000–1022 (MVGGLLVSQVLTLFTTPVIYLLF).

Belongs to the resistance-nodulation-cell division (RND) (TC 2.A.6) family. MdtB subfamily. In terms of assembly, part of a tripartite efflux system composed of MdtA, MdtB and MdtC. MdtB forms a heteromultimer with MdtC.

Its subcellular location is the cell inner membrane. In Salmonella typhimurium (strain LT2 / SGSC1412 / ATCC 700720), this protein is Multidrug resistance protein MdtB.